The following is a 115-amino-acid chain: NAD(P)H-quinone oxidoreductase subunit M (115 aa).

The protein belongs to the complex I NdhM subunit family. As to quaternary structure, NDH-1 can be composed of about 15 different subunits; different subcomplexes with different compositions have been identified which probably have different functions.

The protein resides in the cellular thylakoid membrane. The catalysed reaction is a plastoquinone + NADH + (n+1) H(+)(in) = a plastoquinol + NAD(+) + n H(+)(out). It catalyses the reaction a plastoquinone + NADPH + (n+1) H(+)(in) = a plastoquinol + NADP(+) + n H(+)(out). Functionally, NDH-1 shuttles electrons from an unknown electron donor, via FMN and iron-sulfur (Fe-S) centers, to quinones in the respiratory and/or the photosynthetic chain. The immediate electron acceptor for the enzyme in this species is believed to be plastoquinone. Couples the redox reaction to proton translocation, and thus conserves the redox energy in a proton gradient. Cyanobacterial NDH-1 also plays a role in inorganic carbon-concentration. This Prochlorococcus marinus (strain MIT 9312) protein is NAD(P)H-quinone oxidoreductase subunit M.